Consider the following 64-residue polypeptide: MKLTCVMIVAVLVLTVCKVVTSDQLKKLRRECYLEPGDSCFHDDGRGACCEGTCFFGVACVPWS.

The signal sequence occupies residues 1–22; it reads MKLTCVMIVAVLVLTVCKVVTS. 3 disulfides stabilise this stretch: Cys-32/Cys-50, Cys-40/Cys-54, and Cys-49/Cys-60.

Expressed by the venom duct.

The protein resides in the secreted. Functionally, probable neurotoxin. The polypeptide is Conotoxin Cal6.24 (Californiconus californicus (California cone)).